We begin with the raw amino-acid sequence, 310 residues long: Ferredoxin--NADP reductase (310 aa).

FAD is bound by residues D26, Q34, Y39, V78, F108, D268, and T308.

It belongs to the ferredoxin--NADP reductase type 2 family. As to quaternary structure, homodimer. FAD serves as cofactor.

It catalyses the reaction 2 reduced [2Fe-2S]-[ferredoxin] + NADP(+) + H(+) = 2 oxidized [2Fe-2S]-[ferredoxin] + NADPH. The sequence is that of Ferredoxin--NADP reductase from Lactobacillus helveticus (strain DPC 4571).